We begin with the raw amino-acid sequence, 238 residues long: Hydatid disease diagnostic antigen P-29 (238 aa).

The 221-residue stretch at 18–238 (GELVNKNEKT…AKECSMMLGE (221 aa)) folds into the BAR domain.

This chain is Hydatid disease diagnostic antigen P-29, found in Echinococcus granulosus (Hydatid tapeworm).